Here is a 943-residue protein sequence, read N- to C-terminus: Isoleucine--tRNA ligase (943 aa).

Positions 58–68 (PYANGTIHIGH) match the 'HIGH' region motif. Glu567 is a binding site for L-isoleucyl-5'-AMP. Residues 608–612 (KMSKS) carry the 'KMSKS' region motif. Position 611 (Lys611) interacts with ATP. Zn(2+) is bound by residues Cys906, Cys909, Cys926, and Cys929.

The protein belongs to the class-I aminoacyl-tRNA synthetase family. IleS type 1 subfamily. As to quaternary structure, monomer. It depends on Zn(2+) as a cofactor.

It localises to the cytoplasm. It catalyses the reaction tRNA(Ile) + L-isoleucine + ATP = L-isoleucyl-tRNA(Ile) + AMP + diphosphate. Functionally, catalyzes the attachment of isoleucine to tRNA(Ile). As IleRS can inadvertently accommodate and process structurally similar amino acids such as valine, to avoid such errors it has two additional distinct tRNA(Ile)-dependent editing activities. One activity is designated as 'pretransfer' editing and involves the hydrolysis of activated Val-AMP. The other activity is designated 'posttransfer' editing and involves deacylation of mischarged Val-tRNA(Ile). The polypeptide is Isoleucine--tRNA ligase (Pseudomonas fluorescens (strain Pf0-1)).